We begin with the raw amino-acid sequence, 193 residues long: Cyanate hydratase (193 aa).

Catalysis depends on residues Arg-121, Glu-124, and Ser-147.

Belongs to the cyanase family.

The enzyme catalyses cyanate + hydrogencarbonate + 3 H(+) = NH4(+) + 2 CO2. Its function is as follows. Catalyzes the reaction of cyanate with bicarbonate to produce ammonia and carbon dioxide. This Phaeodactylum tricornutum (strain CCAP 1055/1) protein is Cyanate hydratase.